A 311-amino-acid polypeptide reads, in one-letter code: Heparan sulfate glucosamine 3-O-sulfotransferase 1 (311 aa).

The signal sequence occupies residues 1–20; the sequence is MTLLLLGAVLLVAQPQLVPS. The N-linked (GlcNAc...) asparagine glycan is linked to N52. 3'-phosphoadenylyl sulfate contacts are provided by residues 68–72, R151, and S159; that span reads KGGTR. N-linked (GlcNAc...) asparagine glycosylation is found at N196, N246, and N253. Y259 contacts 3'-phosphoadenylyl sulfate. C260 and C269 form a disulfide bridge. 274 to 278 lines the 3'-phosphoadenylyl sulfate pocket; that stretch reads KGRAH.

Belongs to the sulfotransferase 1 family.

The protein localises to the golgi apparatus lumen. It catalyses the reaction alpha-D-glucosaminyl-[heparan sulfate](n) + 3'-phosphoadenylyl sulfate = 3-sulfo-alpha-D-glucosaminyl-[heparan sulfate](n) + adenosine 3',5'-bisphosphate + H(+). Sulfotransferase that utilizes 3'-phospho-5'-adenylyl sulfate (PAPS) to catalyze the transfer of a sulfo group to position 3 of glucosamine residues in heparan. Catalyzes the rate limiting step in the biosynthesis of heparan sulfate (HSact). This modification is a crucial step in the biosynthesis of anticoagulant heparan sulfate as it completes the structure of the antithrombin pentasaccharide binding site. This chain is Heparan sulfate glucosamine 3-O-sulfotransferase 1 (Hs3st1), found in Rattus norvegicus (Rat).